Here is a 437-residue protein sequence, read N- to C-terminus: Transmembrane protease serine 4 (437 aa).

Residues 1–32 are Cytoplasmic-facing; it reads MLQDPDSDQPLNSLDVKPLRKPRIPMETFRKV. The chain crosses the membrane as a helical; Signal-anchor for type II membrane protein span at residues 33–53; that stretch reads GIPIIIALLSLASIIIVVVLI. Residues 54–437 are Extracellular-facing; that stretch reads KVILDKYYFL…WIYNVWKAEL (384 aa). An LDL-receptor class A domain is found at 61–93; sequence YFLCGQPLHFIPRKQLCDGELDCPLGEDEEHCV. Intrachain disulfides connect C64–C83, C77–C92, C127–C183, C140–C193, C196–C310, C230–C246, C356–C372, and C383–C410. The 111-residue stretch at 94–204 folds into the SRCR domain; sequence KSFPEGPAVA…ACGKSLKTPR (111 aa). N-linked (GlcNAc...) asparagine glycosylation is found at N130 and N178. Positions 205 to 434 constitute a Peptidase S1 domain; it reads VVGVEEASVD…YLNWIYNVWK (230 aa). Catalysis depends on charge relay system residues H245 and D290. The Charge relay system role is filled by S387.

This sequence belongs to the peptidase S1 family. Post-translationally, proteolytically processed; probably by an autocatalytic mechanism. High levels in pancreatic, gastric, colorectal and ampullary cancer. Very weak expression in normal gastrointestinal and urogenital tract. Coexpressed with ACE2 within mature enterocytes.

It is found in the cell membrane. The protein resides in the secreted. In terms of biological role, plasma membrane-anchored serine protease that directly induces processing of pro-uPA/PLAU into the active form through proteolytic activity. Seems to be capable of activating ENaC. Its function is as follows. (Microbial infection) In gut epithelial cells, facilitates human coronavirus SARS-CoV-2 infection through, at least, the cleavage of coronavirus spike glycoproteins which activates the glycoprotein for host cell entry. This is Transmembrane protease serine 4 from Homo sapiens (Human).